A 198-amino-acid chain; its full sequence is Protein GrpE (198 aa).

The tract at residues 1-56 is disordered; that stretch reads MVEKKKSQAEKNNQSATEEEIEKAVKGSKRDSNAADEKNSASAAASSSAVSDAEPA. Over residues 22–39 the composition is skewed to basic and acidic residues; sequence EKAVKGSKRDSNAADEKN. The span at 40–56 shows a compositional bias: low complexity; it reads SASAAASSSAVSDAEPA.

This sequence belongs to the GrpE family. In terms of assembly, homodimer.

It localises to the cytoplasm. In terms of biological role, participates actively in the response to hyperosmotic and heat shock by preventing the aggregation of stress-denatured proteins, in association with DnaK and GrpE. It is the nucleotide exchange factor for DnaK and may function as a thermosensor. Unfolded proteins bind initially to DnaJ; upon interaction with the DnaJ-bound protein, DnaK hydrolyzes its bound ATP, resulting in the formation of a stable complex. GrpE releases ADP from DnaK; ATP binding to DnaK triggers the release of the substrate protein, thus completing the reaction cycle. Several rounds of ATP-dependent interactions between DnaJ, DnaK and GrpE are required for fully efficient folding. This is Protein GrpE from Oenococcus oeni (strain ATCC BAA-331 / PSU-1).